Consider the following 217-residue polypeptide: Ribosomal RNA large subunit methyltransferase E (217 aa).

Gly64, Trp66, Asp92, Asp108, and Asp133 together coordinate S-adenosyl-L-methionine. Lys173 (proton acceptor) is an active-site residue.

This sequence belongs to the class I-like SAM-binding methyltransferase superfamily. RNA methyltransferase RlmE family.

The protein localises to the cytoplasm. It carries out the reaction uridine(2552) in 23S rRNA + S-adenosyl-L-methionine = 2'-O-methyluridine(2552) in 23S rRNA + S-adenosyl-L-homocysteine + H(+). In terms of biological role, specifically methylates the uridine in position 2552 of 23S rRNA at the 2'-O position of the ribose in the fully assembled 50S ribosomal subunit. The protein is Ribosomal RNA large subunit methyltransferase E of Delftia acidovorans (strain DSM 14801 / SPH-1).